We begin with the raw amino-acid sequence, 144 residues long: Putative pre-16S rRNA nuclease (144 aa).

The protein belongs to the YqgF nuclease family.

It is found in the cytoplasm. Its function is as follows. Could be a nuclease involved in processing of the 5'-end of pre-16S rRNA. The polypeptide is Putative pre-16S rRNA nuclease (Ralstonia nicotianae (strain ATCC BAA-1114 / GMI1000) (Ralstonia solanacearum)).